The sequence spans 129 residues: M-zodatoxin-Lt8h (129 aa).

The signal sequence occupies residues 1–20 (MKYFVVALALVAAFACIAES). A propeptide spanning residues 21 to 60 (KPAESEHELAEVEEENELADLEDAVWLEDLADLSDLEETR) is cleaved from the precursor.

Belongs to the cationic peptide 06 (cytoinsectotoxin) family. In terms of tissue distribution, expressed by the venom gland.

The protein resides in the secreted. In terms of biological role, insecticidal, cytolytic and antimicrobial peptide. Has insecticidal activity against the flesh fly S.carnaria. Has antibacterial activity against the Gram-negative bacteria E.coli. Forms voltage-dependent, ion-permeable channels in membranes. At high concentration causes cell membrane lysis. The protein is M-zodatoxin-Lt8h (cit 1-11) of Lachesana tarabaevi (Spider).